Consider the following 1486-residue polypeptide: Chromosome partition protein MukB (1486 aa).

Position 34-41 (Gly-34–Ser-41) interacts with ATP. Coiled-coil stretches lie at residues Leu-326–Gln-418, Leu-444–Gln-480, and Arg-509–Val-603. The interval Pro-666–Arg-783 is flexible hinge. 3 coiled-coil regions span residues Glu-835–Glu-923, Glu-977–Ala-1115, and Val-1209–Ser-1266.

It belongs to the SMC family. MukB subfamily. Homodimerization via its hinge domain. Binds to DNA via its C-terminal region. Interacts, and probably forms a ternary complex, with MukE and MukF via its C-terminal region. The complex formation is stimulated by calcium or magnesium. Interacts with tubulin-related protein FtsZ.

Its subcellular location is the cytoplasm. It is found in the nucleoid. Its function is as follows. Plays a central role in chromosome condensation, segregation and cell cycle progression. Functions as a homodimer, which is essential for chromosome partition. Involved in negative DNA supercoiling in vivo, and by this means organize and compact chromosomes. May achieve or facilitate chromosome segregation by condensation DNA from both sides of a centrally located replisome during cell division. In Escherichia coli (strain ATCC 8739 / DSM 1576 / NBRC 3972 / NCIMB 8545 / WDCM 00012 / Crooks), this protein is Chromosome partition protein MukB.